Reading from the N-terminus, the 268-residue chain is Lipase 1 (268 aa).

Residues 1–29 (MRRFRLVGFLSSLVLAAGAALTGAATAQA) form the signal peptide. Ser-44 serves as the catalytic Nucleophile. Cystine bridges form between Cys-61/Cys-86, Cys-127/Cys-135, and Cys-185/Cys-231. The active site involves His-250.

Belongs to the 'GDSL' lipolytic enzyme family. Monomer.

It is found in the secreted. It carries out the reaction a triacylglycerol + H2O = a diacylglycerol + a fatty acid + H(+). Strongly inhibited by Ag(+). The cations Ca(2+), Mg(2+), Co(2+) and Cu(2+) do not significantly reduce the lipolytic activity of SCO1725. Is also inhibited by DTT in vitro, but not by EDTA or by the reagent masking SH-groups, p-hydroxymercuribenzoate (pHMB). Is resistant to PMSF inhibition, except in the presence of Ca(2+). Is also strongly inhibited by 3,4-dichloroisocoumarin (DCI), another inhibitor of serine hydrolases. Addition of tetrahydrofuran and 1,4-dioxane significantly increases (2- and 4- fold, respectively) hydrolytic activity of lipase towards p-nitrophenyl caprylate. Catalyzes the hydrolysis of fatty acid esters with a preference for mid-length acyl chain (C10-C16). Is able to hydrolyze the triacylglycerol triolein and mixed triacylglycerols from a wide range of natural oils; better activity is obtained with corn-, wheat germ- and olive oil that have higher content of linoleic and/or oleic acid (C18:2; C18:1, cis). Tween detergents are also substrates for this enzyme. Displays arylesterase activity towards p-nitrophenyl alkanoate esters and alpha- and beta-naphthyl esters. The polypeptide is Lipase 1 (Streptomyces coelicolor (strain ATCC BAA-471 / A3(2) / M145)).